We begin with the raw amino-acid sequence, 117 residues long: Large ribosomal subunit protein bL20c (117 aa).

Belongs to the bacterial ribosomal protein bL20 family.

The protein resides in the plastid. Its subcellular location is the chloroplast. Binds directly to 23S ribosomal RNA and is necessary for the in vitro assembly process of the 50S ribosomal subunit. It is not involved in the protein synthesizing functions of that subunit. The chain is Large ribosomal subunit protein bL20c from Calycanthus floridus var. glaucus (Eastern sweetshrub).